The chain runs to 602 residues: Elongation factor 4 (602 aa).

Residues 7 to 189 enclose the tr-type G domain; the sequence is SKIRNFCIIA…AIVRRVPPPQ (183 aa). GTP is bound by residues 19-24 and 136-139; these read DHGKST and NKVD.

The protein belongs to the TRAFAC class translation factor GTPase superfamily. Classic translation factor GTPase family. LepA subfamily.

It is found in the cell inner membrane. It catalyses the reaction GTP + H2O = GDP + phosphate + H(+). Required for accurate and efficient protein synthesis under certain stress conditions. May act as a fidelity factor of the translation reaction, by catalyzing a one-codon backward translocation of tRNAs on improperly translocated ribosomes. Back-translocation proceeds from a post-translocation (POST) complex to a pre-translocation (PRE) complex, thus giving elongation factor G a second chance to translocate the tRNAs correctly. Binds to ribosomes in a GTP-dependent manner. This Prochlorococcus marinus (strain MIT 9215) protein is Elongation factor 4.